The primary structure comprises 169 residues: MITAASLLTALAVFIARLCDVCLGTIRHVMIIRGRRLLAFSVAFFEAVIWVYAVSRVIGAVSDPVTSLAFALGFASGTYAGITLEGVFKIGEQVVRVFTREGGPVACTLRDAGFRVTVFDGQGRDGVVNLLFVQVRRRQAGEVARIARNVDPECYMVVDDIRKTYTVGG.

3 helical membrane-spanning segments follow: residues 1–21 (MITA…LCDV), 38–58 (LAFS…SRVI), and 68–88 (LAFA…EGVF).

This sequence belongs to the UPF0316 family.

The protein localises to the cell membrane. The protein is UPF0316 protein Dde_2502 of Oleidesulfovibrio alaskensis (strain ATCC BAA-1058 / DSM 17464 / G20) (Desulfovibrio alaskensis).